A 565-amino-acid polypeptide reads, in one-letter code: Periplasmic trehalase (565 aa).

The first 30 residues, 1-30 (MKSPTPSRPQKMALIPACIFLCFAALSVQA), serve as a signal peptide directing secretion. Residues arginine 152, 159 to 160 (WD), asparagine 196, 205 to 207 (RSQ), 277 to 279 (RPE), and glycine 310 each bind substrate. Active-site proton donor/acceptor residues include aspartate 312 and glutamate 496. Glutamate 511 is a substrate binding site. The tract at residues 539–565 (CDNVPATRPLSESTTQPLKQKEAEPTP) is disordered.

The protein belongs to the glycosyl hydrolase 37 family. As to quaternary structure, monomer.

The protein localises to the periplasm. It catalyses the reaction alpha,alpha-trehalose + H2O = alpha-D-glucose + beta-D-glucose. Provides the cells with the ability to utilize trehalose at high osmolarity by splitting it into glucose molecules that can subsequently be taken up by the phosphotransferase-mediated uptake system. This chain is Periplasmic trehalase, found in Escherichia coli O7:K1 (strain IAI39 / ExPEC).